The chain runs to 268 residues: Interleukin-1 beta (268 aa).

Residues Met1–Asp116 constitute a propeptide that is removed on maturation.

This sequence belongs to the IL-1 family. As to quaternary structure, monomer. In its precursor form, weakly interacts with full-length MEFV; the mature cytokine does not interact at all. Interacts with integrins ITGAV:ITGBV and ITGA5:ITGB1; integrin-binding is required for IL1B signaling. Interacts with cargo receptor TMED10; the interaction is direct and is required for the secretion of IL1B mature form. Interacts with HSP90AB1; the interaction facilitates cargo translocation into the ERGIC. Interacts with HSP90B1; the interaction facilitates cargo translocation into the ERGIC.

It is found in the cytoplasm. The protein resides in the cytosol. The protein localises to the secreted. It localises to the lysosome. Its subcellular location is the extracellular exosome. Its function is as follows. Potent pro-inflammatory cytokine. Initially discovered as the major endogenous pyrogen, induces prostaglandin synthesis, neutrophil influx and activation, T-cell activation and cytokine production, B-cell activation and antibody production, and fibroblast proliferation and collagen production. Promotes Th17 differentiation of T-cells. Synergizes with IL12/interleukin-12 to induce IFNG synthesis from T-helper 1 (Th1) cells. Plays a role in angiogenesis by inducing VEGF production synergistically with TNF and IL6. Involved in transduction of inflammation downstream of pyroptosis: its mature form is specifically released in the extracellular milieu by passing through the gasdermin-D (GSDMD) pore. This is Interleukin-1 beta (IL1B) from Oryctolagus cuniculus (Rabbit).